The following is a 152-amino-acid chain: Kininogen-1c (152 aa).

An N-terminal signal peptide occupies residues 1–23; it reads MRLWFCLSLFIVLCLEHFPGTLA. Positions 28–44 are enriched in basic and acidic residues; that stretch reads VPESEEKTEQFLRDLPK. The disordered stretch occupies residues 28–152; the sequence is VPESEEKTEQ…RGKFHSQSHV (125 aa).

It belongs to the bradykinin-related peptide family. As to expression, expressed by the skin glands.

Its subcellular location is the secreted. Functionally, potent vasodilator. Binds B1 (BDKRB1) and B2 (BDKRB2) bradykinin receptors. The sequence is that of Kininogen-1c from Bombina maxima (Giant fire-bellied toad).